We begin with the raw amino-acid sequence, 387 residues long: Cytochrome b (387 aa).

4 consecutive transmembrane segments (helical) span residues 32–52 (FGSL…LLAC), 76–98 (FLLR…LHIG), 113–133 (TWNI…LGYC), and 179–199 (FFSL…MHLI). Heme b-binding residues include His82 and His96. The heme b site is built by His183 and His197. Position 202 (His202) interacts with a ubiquinone. 4 consecutive transmembrane segments (helical) span residues 225–245 (YLIK…YMAF), 289–309 (QLGV…PLLD), 321–341 (FGKF…WIGG), and 348–368 (FITI…ILIP).

The protein belongs to the cytochrome b family. In terms of assembly, fungal cytochrome b-c1 complex contains 10 subunits; 3 respiratory subunits, 2 core proteins and 5 low-molecular weight proteins. Cytochrome b-c1 complex is a homodimer. Heme b is required as a cofactor.

It localises to the mitochondrion inner membrane. Functionally, component of the ubiquinol-cytochrome c reductase complex (complex III or cytochrome b-c1 complex) that is part of the mitochondrial respiratory chain. The b-c1 complex mediates electron transfer from ubiquinol to cytochrome c. Contributes to the generation of a proton gradient across the mitochondrial membrane that is then used for ATP synthesis. The protein is Cytochrome b (cob) of Schizosaccharomyces pombe (strain 972 / ATCC 24843) (Fission yeast).